A 185-amino-acid polypeptide reads, in one-letter code: Crossover junction endodeoxyribonuclease RuvC (185 aa).

Residues aspartate 7, glutamate 68, and aspartate 141 contribute to the active site. Aspartate 7, glutamate 68, and aspartate 141 together coordinate Mg(2+).

The protein belongs to the RuvC family. Homodimer which binds Holliday junction (HJ) DNA. The HJ becomes 2-fold symmetrical on binding to RuvC with unstacked arms; it has a different conformation from HJ DNA in complex with RuvA. In the full resolvosome a probable DNA-RuvA(4)-RuvB(12)-RuvC(2) complex forms which resolves the HJ. Mg(2+) is required as a cofactor.

Its subcellular location is the cytoplasm. It catalyses the reaction Endonucleolytic cleavage at a junction such as a reciprocal single-stranded crossover between two homologous DNA duplexes (Holliday junction).. Functionally, the RuvA-RuvB-RuvC complex processes Holliday junction (HJ) DNA during genetic recombination and DNA repair. Endonuclease that resolves HJ intermediates. Cleaves cruciform DNA by making single-stranded nicks across the HJ at symmetrical positions within the homologous arms, yielding a 5'-phosphate and a 3'-hydroxyl group; requires a central core of homology in the junction. The consensus cleavage sequence is 5'-(A/T)TT(C/G)-3'. Cleavage occurs on the 3'-side of the TT dinucleotide at the point of strand exchange. HJ branch migration catalyzed by RuvA-RuvB allows RuvC to scan DNA until it finds its consensus sequence, where it cleaves and resolves the cruciform DNA. The sequence is that of Crossover junction endodeoxyribonuclease RuvC from Helicobacter hepaticus (strain ATCC 51449 / 3B1).